Here is a 61-residue protein sequence, read N- to C-terminus: Small ribosomal subunit protein uS14 (61 aa).

Zn(2+) contacts are provided by Cys-24, Cys-27, Cys-40, and Cys-43.

It belongs to the universal ribosomal protein uS14 family. Zinc-binding uS14 subfamily. In terms of assembly, part of the 30S ribosomal subunit. Contacts proteins S3 and S10. The cofactor is Zn(2+).

Binds 16S rRNA, required for the assembly of 30S particles and may also be responsible for determining the conformation of the 16S rRNA at the A site. This is Small ribosomal subunit protein uS14 from Helicobacter pylori (strain J99 / ATCC 700824) (Campylobacter pylori J99).